The primary structure comprises 583 residues: 2-succinyl-5-enolpyruvyl-6-hydroxy-3-cyclohexene-1-carboxylate synthase (583 aa).

It belongs to the TPP enzyme family. MenD subfamily. Homodimer. Mg(2+) serves as cofactor. Requires Mn(2+) as cofactor. The cofactor is thiamine diphosphate.

The catalysed reaction is isochorismate + 2-oxoglutarate + H(+) = 5-enolpyruvoyl-6-hydroxy-2-succinyl-cyclohex-3-ene-1-carboxylate + CO2. It functions in the pathway quinol/quinone metabolism; 1,4-dihydroxy-2-naphthoate biosynthesis; 1,4-dihydroxy-2-naphthoate from chorismate: step 2/7. It participates in quinol/quinone metabolism; menaquinone biosynthesis. In terms of biological role, catalyzes the thiamine diphosphate-dependent decarboxylation of 2-oxoglutarate and the subsequent addition of the resulting succinic semialdehyde-thiamine pyrophosphate anion to isochorismate to yield 2-succinyl-5-enolpyruvyl-6-hydroxy-3-cyclohexene-1-carboxylate (SEPHCHC). The protein is 2-succinyl-5-enolpyruvyl-6-hydroxy-3-cyclohexene-1-carboxylate synthase of Chlorobaculum parvum (strain DSM 263 / NCIMB 8327) (Chlorobium vibrioforme subsp. thiosulfatophilum).